Reading from the N-terminus, the 505-residue chain is Phosphoglycerate kinase A (505 aa).

Residues Val32, Asp33, Phe34, Asn35, Arg48, Ser70, His71, Gly73, Arg74, Arg224, His260, and Arg261 each coordinate (2R)-3-phosphoglycerate. Gly306 and Ala307 together coordinate ADP. Position 306 (Gly306) interacts with CDP. The AMP site is built by Ala307 and Lys308. Ala307 is an ATP binding site. Ala307 provides a ligand contact to Mg(2+). Lys308 lines the (2R)-3-phosphoglycerate pocket. Glu311 contributes to the CDP binding site. Mg(2+) is bound at residue Glu311. Residues Lys312 and Gly330 each coordinate ADP. Lys312 is an AMP binding site. Lys312 contributes to the ATP binding site. Gly330 is a CDP binding site. The AMP site is built by Ala331 and Ala403. Positions 331 and 403 each coordinate ATP. ADP is bound by residues Ala403 and Asn427. CDP-binding residues include Gly428 and Phe433. ADP-binding residues include Phe433, Glu434, Glu466, and Ser467. Glu434 contacts AMP. Residues Glu434, Glu466, and Ser467 each contribute to the ATP site. Glu466 provides a ligand contact to Mg(2+).

This sequence belongs to the phosphoglycerate kinase family. As to quaternary structure, monomer. Mg(2+) serves as cofactor.

It catalyses the reaction (2R)-3-phosphoglycerate + ATP = (2R)-3-phospho-glyceroyl phosphate + ADP. It participates in carbohydrate degradation; glycolysis; pyruvate from D-glyceraldehyde 3-phosphate: step 2/5. The protein is Phosphoglycerate kinase A of Trypanosoma brucei brucei.